The chain runs to 520 residues: Transactivator/viroplasmin protein (520 aa).

2 disordered regions span residues 103–126 (SDFL…SVAP) and 487–520 (EDAS…KQVD).

Belongs to the caulimoviridae viroplasmin family.

It localises to the host cytoplasm. Enhances the ribosomal termination-reinitiation event leading to the translation of major open reading frames on the polycistronic viral RNAs. The sequence is that of Transactivator/viroplasmin protein from Arabidopsis thaliana (Mouse-ear cress).